Here is a 1199-residue protein sequence, read N- to C-terminus: Tubulin-specific chaperone D (1199 aa).

2 disordered regions span residues 1–23 and 337–361; these read MALS…VEDA and QHSI…QDDV. Positions 14–23 are enriched in acidic residues; the sequence is DPVEDPVEDA. HEAT repeat units follow at residues 368–406, 603–639, 757–793, and 1111–1147; these read VIEQ…ADDV, EHTA…ARSL, AAAQ…PAFF, and GDVR…VLTY.

Belongs to the TBCD family. In terms of assembly, found in a complex with at least ARL2, PPP2CB, PPP2R1A, PPP2R2A, PPP2R5E and TBCD. Interacts with PPP2CB. Part of a supercomplex made of cofactors A to E. Cofactors A and D function by capturing and stabilizing tubulin in a quasi-native conformation. Cofactor E binds to the cofactor D-tubulin complex; interaction with cofactor C then causes the release of tubulin polypeptides that are committed to the native state. Interacts with ARL2; interaction is enhanced with the GDP-bound form of ARL2. Does not interact with ARL3, ARL4A and ARL4D. Interacts with beta tubulin. Interacts with TBCE.

The protein localises to the cell junction. The protein resides in the tight junction. Its subcellular location is the lateral cell membrane. It localises to the cytoplasm. It is found in the adherens junction. The protein localises to the cytoskeleton. The protein resides in the microtubule organizing center. Its subcellular location is the centrosome. Its function is as follows. Tubulin-folding protein implicated in the first step of the tubulin folding pathway and required for tubulin complex assembly. Involved in the regulation of microtubule polymerization or depolymerization, it modulates microtubule dynamics by capturing GTP-bound beta-tubulin (TUBB). Its ability to interact with beta tubulin is regulated via its interaction with ARL2. Acts as a GTPase-activating protein (GAP) for ARL2. Induces microtubule disruption in absence of ARL2. Increases degradation of beta tubulin, when overexpressed in polarized cells. Promotes epithelial cell detachment, a process antagonized by ARL2. Induces tight adherens and tight junctions disassembly at the lateral cell membrane. Required for correct assembly and maintenance of the mitotic spindle, and proper progression of mitosis. Involved in neuron morphogenesis. The polypeptide is Tubulin-specific chaperone D (TBCD) (Bos taurus (Bovine)).